A 370-amino-acid polypeptide reads, in one-letter code: Cytochrome b (370 aa).

4 helical membrane-spanning segments follow: residues 25–45 (FGSM…FLAV), 69–90 (WMMQ…YIHI), 105–125 (WLSG…GYVL), and 170–190 (FFAL…LHIL). 2 residues coordinate heme b: histidine 75 and histidine 89. Heme b-binding residues include histidine 174 and histidine 188. Histidine 193 provides a ligand contact to a ubiquinone. A run of 4 helical transmembrane segments spans residues 218 to 238 (YKDM…VSFF), 280 to 300 (LGGA…PFTH), 312 to 332 (FMQL…WTAT), and 339 to 358 (FTTI…ISNP).

It belongs to the cytochrome b family. The cytochrome bc1 complex contains 3 respiratory subunits (MT-CYB, CYC1 and UQCRFS1), 2 core proteins (UQCRC1 and UQCRC2) and probably 6 low-molecular weight proteins. The cofactor is heme b.

Its subcellular location is the mitochondrion inner membrane. In terms of biological role, component of the ubiquinol-cytochrome c reductase complex (complex III or cytochrome b-c1 complex) that is part of the mitochondrial respiratory chain. The b-c1 complex mediates electron transfer from ubiquinol to cytochrome c. Contributes to the generation of a proton gradient across the mitochondrial membrane that is then used for ATP synthesis. The chain is Cytochrome b (MT-CYB) from Chilabothrus exsul (Abaco Island boa).